The following is a 559-amino-acid chain: D-2-hydroxyglutarate dehydrogenase, mitochondrial (559 aa).

The transit peptide at 1–78 (MMMQKLRRSG…GMLLQQYKCF (78 aa)) directs the protein to the mitochondrion. The 180-residue stretch at 130–309 (YKGSSKLMLL…TKVSILTQPK (180 aa)) folds into the FAD-binding PCMH-type domain.

The protein belongs to the FAD-binding oxidoreductase/transferase type 4 family. As to quaternary structure, homodimer. FAD serves as cofactor.

Its subcellular location is the mitochondrion. The enzyme catalyses (R)-2-hydroxyglutarate + A = 2-oxoglutarate + AH2. Functionally, catalyzes the oxidation of (R)-2-hydroxyglutarate to 2-oxoglutarate. May be involved in the catabolism of propionyl-CoA derived from beta-oxidation. Involved in degradation of lysine for the supply of carbon and electrons to the ETF/ETFQO complex during dark-induced sugar starvation. This is D-2-hydroxyglutarate dehydrogenase, mitochondrial (D2HGDH) from Arabidopsis thaliana (Mouse-ear cress).